A 452-amino-acid chain; its full sequence is Cell division protein FtsZ (452 aa).

GTP is bound by residues 24–28 (GAGSN), 111–113 (GTG), Glu142, Arg146, and Asp190.

Belongs to the FtsZ family. In terms of assembly, homodimer. Polymerizes to form a dynamic ring structure in a strictly GTP-dependent manner. Interacts directly with several other division proteins.

Its subcellular location is the cytoplasm. In terms of biological role, essential cell division protein that forms a contractile ring structure (Z ring) at the future cell division site. The regulation of the ring assembly controls the timing and the location of cell division. One of the functions of the FtsZ ring is to recruit other cell division proteins to the septum to produce a new cell wall between the dividing cells. Binds GTP and shows GTPase activity. This chain is Cell division protein FtsZ, found in Rickettsia typhi (strain ATCC VR-144 / Wilmington).